The chain runs to 83 residues: Small ribosomal subunit protein uS17 (83 aa).

The protein belongs to the universal ribosomal protein uS17 family. As to quaternary structure, part of the 30S ribosomal subunit.

One of the primary rRNA binding proteins, it binds specifically to the 5'-end of 16S ribosomal RNA. In Synechococcus sp. (strain RCC307), this protein is Small ribosomal subunit protein uS17.